A 356-amino-acid chain; its full sequence is Histidinol-phosphate aminotransferase 1 (356 aa).

N6-(pyridoxal phosphate)lysine is present on lysine 213.

This sequence belongs to the class-II pyridoxal-phosphate-dependent aminotransferase family. Histidinol-phosphate aminotransferase subfamily. In terms of assembly, homodimer. Pyridoxal 5'-phosphate serves as cofactor.

It carries out the reaction L-histidinol phosphate + 2-oxoglutarate = 3-(imidazol-4-yl)-2-oxopropyl phosphate + L-glutamate. It participates in amino-acid biosynthesis; L-histidine biosynthesis; L-histidine from 5-phospho-alpha-D-ribose 1-diphosphate: step 7/9. This is Histidinol-phosphate aminotransferase 1 (hisC1) from Bordetella parapertussis (strain 12822 / ATCC BAA-587 / NCTC 13253).